The chain runs to 424 residues: Na(+)/H(+) antiporter NhaA (424 aa).

The next 11 helical transmembrane spans lie at 23–43, 65–85, 102–122, 131–151, 160–180, 183–203, 211–231, 265–285, 303–323, 341–361, and 373–393; these read ILLI…LATL, VHLW…GLEI, LPFI…MFFV, GWAI…ALLG, LFLV…IALF, AKIN…MFAC, LLVY…SGVH, ALHP…NAGV, IAAG…WLAV, AVSM…SLAF, and IGIL…LRLA.

It belongs to the NhaA Na(+)/H(+) (TC 2.A.33) antiporter family.

The protein localises to the cell inner membrane. It carries out the reaction Na(+)(in) + 2 H(+)(out) = Na(+)(out) + 2 H(+)(in). Na(+)/H(+) antiporter that extrudes sodium in exchange for external protons. The sequence is that of Na(+)/H(+) antiporter NhaA from Sphingopyxis alaskensis (strain DSM 13593 / LMG 18877 / RB2256) (Sphingomonas alaskensis).